Reading from the N-terminus, the 322-residue chain is Manganese-dependent ADP-ribose/CDP-alcohol diphosphatase (322 aa).

Residues D13, Q15, D60, N96, H228, H265, and H267 each coordinate Zn(2+).

Belongs to the ADPRibase-Mn family. Monomer. Mg(2+) is required as a cofactor.

It catalyses the reaction CDP-choline + H2O = phosphocholine + CMP + 2 H(+). The enzyme catalyses ADP-D-ribose + H2O = D-ribose 5-phosphate + AMP + 2 H(+). The catalysed reaction is CDP-glycerol + H2O = sn-glycerol 3-phosphate + CMP + 2 H(+). Its function is as follows. Hydrolyzes ADP-ribose, IDP-ribose, CDP-glycerol, CDP-choline and CDP-ethanolamine, but not other non-reducing ADP-sugars or CDP-glucose. The sequence is that of Manganese-dependent ADP-ribose/CDP-alcohol diphosphatase (adprm) from Danio rerio (Zebrafish).